We begin with the raw amino-acid sequence, 190 residues long: Pyridoxal 5'-phosphate synthase subunit PdxT (190 aa).

46–48 (GES) provides a ligand contact to L-glutamine. Cysteine 78 functions as the Nucleophile in the catalytic mechanism. L-glutamine is bound by residues arginine 106 and 135 to 136 (IR). Catalysis depends on charge relay system residues histidine 171 and glutamate 173.

The protein belongs to the glutaminase PdxT/SNO family. In the presence of PdxS, forms a dodecamer of heterodimers. Only shows activity in the heterodimer.

The enzyme catalyses aldehydo-D-ribose 5-phosphate + D-glyceraldehyde 3-phosphate + L-glutamine = pyridoxal 5'-phosphate + L-glutamate + phosphate + 3 H2O + H(+). The catalysed reaction is L-glutamine + H2O = L-glutamate + NH4(+). The protein operates within cofactor biosynthesis; pyridoxal 5'-phosphate biosynthesis. Functionally, catalyzes the hydrolysis of glutamine to glutamate and ammonia as part of the biosynthesis of pyridoxal 5'-phosphate. The resulting ammonia molecule is channeled to the active site of PdxS. In Dictyoglomus turgidum (strain DSM 6724 / Z-1310), this protein is Pyridoxal 5'-phosphate synthase subunit PdxT.